The following is a 116-amino-acid chain: Large ribosomal subunit protein bL20 (116 aa).

This sequence belongs to the bacterial ribosomal protein bL20 family.

In terms of biological role, binds directly to 23S ribosomal RNA and is necessary for the in vitro assembly process of the 50S ribosomal subunit. It is not involved in the protein synthesizing functions of that subunit. The polypeptide is Large ribosomal subunit protein bL20 (Hydrogenobaculum sp. (strain Y04AAS1)).